A 210-amino-acid polypeptide reads, in one-letter code: N-(5'-phosphoribosyl)anthranilate isomerase (210 aa).

It belongs to the TrpF family.

The enzyme catalyses N-(5-phospho-beta-D-ribosyl)anthranilate = 1-(2-carboxyphenylamino)-1-deoxy-D-ribulose 5-phosphate. It participates in amino-acid biosynthesis; L-tryptophan biosynthesis; L-tryptophan from chorismate: step 3/5. In Nostoc punctiforme (strain ATCC 29133 / PCC 73102), this protein is N-(5'-phosphoribosyl)anthranilate isomerase.